Reading from the N-terminus, the 472-residue chain is Glutamate-1-semialdehyde 2,1-aminomutase 2, chloroplastic (472 aa).

Residues methionine 1 to serine 36 constitute a chloroplast transit peptide. N6-(pyridoxal phosphate)lysine is present on lysine 312.

Belongs to the class-III pyridoxal-phosphate-dependent aminotransferase family. HemL subfamily. As to quaternary structure, homodimer. Requires pyridoxal 5'-phosphate as cofactor. As to expression, expressed in leaf primordia and shoot apical meristems (SAM).

It localises to the plastid. The protein resides in the chloroplast. The enzyme catalyses (S)-4-amino-5-oxopentanoate = 5-aminolevulinate. It participates in porphyrin-containing compound metabolism; protoporphyrin-IX biosynthesis; 5-aminolevulinate from L-glutamyl-tRNA(Glu): step 2/2. The protein operates within porphyrin-containing compound metabolism; chlorophyll biosynthesis. In terms of biological role, transaminase converting glutamate 1-semialdehyde (GSA) to 5-aminolevulinate (ALA). Involved in the biosynthesis of tetrapyrroles. This is Glutamate-1-semialdehyde 2,1-aminomutase 2, chloroplastic from Arabidopsis thaliana (Mouse-ear cress).